Here is a 568-residue protein sequence, read N- to C-terminus: uncharacterized protein (568 aa).

The segment covering 334–346 (DDNEEKNNDRPKI) has biased composition (basic and acidic residues). Disordered regions lie at residues 334 to 382 (DDNE…NDQN) and 436 to 479 (QVEE…SCKN). Low complexity predominate over residues 458–477 (KIASSASKNDNSNNKNSKSC).

The protein to yeast YJL043w.

This is an uncharacterized protein from Saccharomyces cerevisiae (strain ATCC 204508 / S288c) (Baker's yeast).